A 341-amino-acid polypeptide reads, in one-letter code: 4-hydroxy-2-oxovalerate aldolase (341 aa).

A Pyruvate carboxyltransferase domain is found at 9 to 260; the sequence is VVITDSTLRD…ATGIDLYRVL (252 aa). Residue 17–18 coordinates substrate; that stretch reads RD. Asp18 lines the Mn(2+) pocket. Catalysis depends on His21, which acts as the Proton acceptor. Ser172 and His199 together coordinate substrate. Mn(2+) is bound by residues His199 and His201.

It belongs to the 4-hydroxy-2-oxovalerate aldolase family.

It catalyses the reaction (S)-4-hydroxy-2-oxopentanoate = acetaldehyde + pyruvate. This Spirochaeta aurantia protein is 4-hydroxy-2-oxovalerate aldolase.